Consider the following 195-residue polypeptide: Holliday junction branch migration complex subunit RuvA (195 aa).

Residues 1–64 are domain I; that stretch reads MIKGVEGEIT…DRAPEIYGFK (64 aa). Residues 65-137 form a domain II region; that stretch reads DRAEYNVFLM…LYDLVKDYAV (73 aa). Residues 137–141 form a flexible linker region; sequence VEFPK. A domain III region spans residues 142–195; that stretch reads ELSDVSEDAVGALTALGFDMTSAKLAVNEVLKEQTVENTQELVRKALRKLNKTR.

Belongs to the RuvA family. In terms of assembly, homotetramer. Forms an RuvA(8)-RuvB(12)-Holliday junction (HJ) complex. HJ DNA is sandwiched between 2 RuvA tetramers; dsDNA enters through RuvA and exits via RuvB. An RuvB hexamer assembles on each DNA strand where it exits the tetramer. Each RuvB hexamer is contacted by two RuvA subunits (via domain III) on 2 adjacent RuvB subunits; this complex drives branch migration. In the full resolvosome a probable DNA-RuvA(4)-RuvB(12)-RuvC(2) complex forms which resolves the HJ.

It localises to the cytoplasm. In terms of biological role, the RuvA-RuvB-RuvC complex processes Holliday junction (HJ) DNA during genetic recombination and DNA repair, while the RuvA-RuvB complex plays an important role in the rescue of blocked DNA replication forks via replication fork reversal (RFR). RuvA specifically binds to HJ cruciform DNA, conferring on it an open structure. The RuvB hexamer acts as an ATP-dependent pump, pulling dsDNA into and through the RuvAB complex. HJ branch migration allows RuvC to scan DNA until it finds its consensus sequence, where it cleaves and resolves the cruciform DNA. This is Holliday junction branch migration complex subunit RuvA from Kosmotoga olearia (strain ATCC BAA-1733 / DSM 21960 / TBF 19.5.1).